The primary structure comprises 511 residues: MVKQIMIQGTASDAGKSVLVAGLCRLFKNKGKRVVPFKSQNMSLNSFITATGDEMGRAQVFQAEAAGVFPDVRMNPVLLKPTNDRQSQVIFMGAILDNMDAVTYHDFKQTLIPKIQAVYQSLADENDIIVLEGAGSPAEINLNDRDIVNMGMAKMVDAPVVLVADIDKGGVFASIYGTIMLLNEEERARIKGVIINKFRGDVALLQPGIDMIEELTNVPVIGVIPYANLQLEEEDSVSLNGKNYAPDSNALLDIAIICLPRISNFTDFHSLEIQPEISLRYIRNLADFGKPDLVIIPGSKNTLEDMAFLEESGLKKAIQNFAENAGKVIGICGGYQMLGQKMLDPDQVESKQLEIAGLGLLDTETIFLDQKRTTQITGVTHSGEAVEGYEIHMGETKRGESTSPFCKIKAVNGNEETHQDGAISANKNIIGTYIHGIFDNDVFLGNLFDELLTRKNQSIYPHEIINLKEHKEQEYDKLAALLEANIQMDQLEKIMKGEKICVSTQKPAIKE.

Residues 251-443 form the GATase cobBQ-type domain; that stretch reads LLDIAIICLP…IHGIFDNDVF (193 aa). Catalysis depends on Cys-332, which acts as the Nucleophile. Residue His-435 is part of the active site.

This sequence belongs to the CobB/CobQ family. CobQ subfamily.

It functions in the pathway cofactor biosynthesis; adenosylcobalamin biosynthesis. In terms of biological role, catalyzes amidations at positions B, D, E, and G on adenosylcobyrinic A,C-diamide. NH(2) groups are provided by glutamine, and one molecule of ATP is hydrogenolyzed for each amidation. The protein is Cobyric acid synthase of Listeria monocytogenes serovar 1/2a (strain ATCC BAA-679 / EGD-e).